The sequence spans 368 residues: Peptide chain release factor 2 (368 aa).

N5-methylglutamine is present on Gln250.

This sequence belongs to the prokaryotic/mitochondrial release factor family. Methylated by PrmC. Methylation increases the termination efficiency of RF2.

It is found in the cytoplasm. Its function is as follows. Peptide chain release factor 2 directs the termination of translation in response to the peptide chain termination codons UGA and UAA. The chain is Peptide chain release factor 2 from Chlamydia trachomatis serovar L2b (strain UCH-1/proctitis).